The primary structure comprises 359 residues: 3-dehydroquinate synthase (359 aa).

Residues 69–74 (DGEAHK), 103–107 (GVIGD), 127–128 (TT), K140, K149, and 167–170 (TLDT) each bind NAD(+). Residues E182, H245, and H262 each contribute to the Zn(2+) site.

It belongs to the sugar phosphate cyclases superfamily. Dehydroquinate synthase family. Co(2+) serves as cofactor. Zn(2+) is required as a cofactor. Requires NAD(+) as cofactor.

The protein localises to the cytoplasm. It catalyses the reaction 7-phospho-2-dehydro-3-deoxy-D-arabino-heptonate = 3-dehydroquinate + phosphate. The protein operates within metabolic intermediate biosynthesis; chorismate biosynthesis; chorismate from D-erythrose 4-phosphate and phosphoenolpyruvate: step 2/7. Functionally, catalyzes the conversion of 3-deoxy-D-arabino-heptulosonate 7-phosphate (DAHP) to dehydroquinate (DHQ). This Methylococcus capsulatus (strain ATCC 33009 / NCIMB 11132 / Bath) protein is 3-dehydroquinate synthase.